A 1225-amino-acid chain; its full sequence is Cohesin subunit SA-3 (1225 aa).

Positions 1–97 (MSSPLQRAVG…HSRKQSEPPA (97 aa)) are disordered. A compositionally biased stretch (low complexity) spans 15–26 (ALSASSSSSASL). Acidic residues predominate over residues 45-54 (LADEDTDFED). 2 stretches are compositionally biased toward basic residues: residues 59-69 (NVKKRAAKRPP) and 76-90 (KHPKKGSRVVHRHSR). The SCD domain maps to 309-394 (FVHRYRDVLP…SRFKDRMVSM (86 aa)). Disordered regions lie at residues 546-567 (SEGHPPVGRVTGRKGLTSKERK), 1063-1113 (AETS…STAV), and 1177-1225 (EEDE…IEDF). Residues 1078 to 1089 (VEGPAKPNREDV) show a composition bias toward basic and acidic residues. Residues 1090–1099 (SSSQEESLQL) show a composition bias toward low complexity. Residues 1177–1191 (EEDEEEELEIQDESN) are compositionally biased toward acidic residues. Positions 1198–1209 (DMQASSYSSTSE) are enriched in polar residues. Phosphoserine is present on Ser-1203. Residues 1216-1225 (DSTELDIEDF) are compositionally biased toward acidic residues.

The protein belongs to the SCC3 family. In terms of assembly, component of the meiosis-specific cohesin complex, which also contains the SMC1 (SMC1A or SMC1B) and SMC3 heterodimer. Such complex likely contains RAD21, or the meiosis-specific related protein REC8. Interacts with CCDC79/TERB1; recruiting cohesin to telomeres to develop structural rigidity. In terms of processing, phosphorylated. Testis specific.

The protein resides in the nucleus. Its subcellular location is the chromosome. The protein localises to the centromere. Meiosis specific component of cohesin complex. The cohesin complex is required for the cohesion of sister chromatids after DNA replication. The cohesin complex apparently forms a large proteinaceous ring within which sister chromatids can be trapped. At anaphase, the complex is cleaved and dissociates from chromatin, allowing sister chromatids to segregate. The meiosis-specific cohesin complex probably replaces mitosis specific cohesin complex when it dissociates from chromatin during prophase I. This Homo sapiens (Human) protein is Cohesin subunit SA-3 (STAG3).